Reading from the N-terminus, the 308-residue chain is Transaldolase (308 aa).

Lys-125 serves as the catalytic Schiff-base intermediate with substrate.

It belongs to the transaldolase family. Type 1 subfamily. As to quaternary structure, homodimer.

It is found in the cytoplasm. The catalysed reaction is D-sedoheptulose 7-phosphate + D-glyceraldehyde 3-phosphate = D-erythrose 4-phosphate + beta-D-fructose 6-phosphate. The protein operates within carbohydrate degradation; pentose phosphate pathway; D-glyceraldehyde 3-phosphate and beta-D-fructose 6-phosphate from D-ribose 5-phosphate and D-xylulose 5-phosphate (non-oxidative stage): step 2/3. In terms of biological role, transaldolase is important for the balance of metabolites in the pentose-phosphate pathway. This chain is Transaldolase, found in Pseudomonas savastanoi pv. phaseolicola (strain 1448A / Race 6) (Pseudomonas syringae pv. phaseolicola (strain 1448A / Race 6)).